We begin with the raw amino-acid sequence, 676 residues long: Envelope glycoprotein (676 aa).

Positions 1-32 (MEGLSLLQLPRDKFRKSSFFVWVIILFQKAFS) are cleaved as a signal peptide. The Extracellular portion of the chain corresponds to 33-650 (MPLGVVTNST…DDNWWTGWRQ (618 aa)). Residue Asn-40 is glycosylated (N-linked (GlcNAc...) asparagine; by host). Intrachain disulfides connect Cys-53/Cys-609, Cys-108/Cys-135, Cys-121/Cys-147, Cys-511/Cys-556, and Cys-601/Cys-608. A receptor-binding region spans residues 54 to 201 (KDHLASTDQL…TFLQSPPIRE (148 aa)). Residues Asn-204, Asn-208, Asn-238, Asn-257, Asn-268, Asn-296, and Asn-314 are each glycosylated (N-linked (GlcNAc...) asparagine; by host). Residues 305-485 (ELSFETLSLN…STSNGLITST (181 aa)) form a mucin-like region region. Positions 313 to 351 (LNETEDDDATSSRTTKGRISDRATRKYSDLVPKDSPGMV) are disordered. A compositionally biased stretch (basic and acidic residues) spans 330-344 (RISDRATRKYSDLVP). Residue Asn-366 is glycosylated (N-linked (GlcNAc...) asparagine; by host). Residues 406–458 (SSSQILSSSPTMAPSPETQTSTTYTPKLPVMTTEESTTPPRNSPGSTTEAPTL) are disordered. Polar residues-rich tracts occupy residues 415–430 (PTMA…TTYT) and 438–458 (TEES…APTL). N-linked (GlcNAc...) asparagine; by host glycosylation is present at Asn-463. Positions 524–539 (HNAAGIAWIPYFGPGA) are fusion peptide. A coiled-coil region spans residues 554 to 595 (LVCGLRQLANETTQALQLFLRATTELRTYTILNRKAIDFLLR). The N-linked (GlcNAc...) asparagine; by host glycan is linked to Asn-563. Residues 615–634 (WTKNITDKINQIIHDFIDNP) are a coiled coil. An N-linked (GlcNAc...) asparagine; by host glycan is attached at Asn-618. Residues 651 to 671 (WIPAGIGITGIIIAIIALLCV) form a helical membrane-spanning segment. Residues Cys-670 and Cys-672 are each lipidated (S-palmitoyl cysteine; by host). At 672-676 (CKLLC) the chain is on the cytoplasmic side.

The protein belongs to the filoviruses glycoprotein family. As to quaternary structure, homotrimer; each monomer consists of a GP1 and a GP2 subunit linked by disulfide bonds. The resulting peplomers (GP1,2) protrude from the virus surface as spikes. Interacts with host integrin alpha-V/ITGAV. Interacts with host CLEC10A. Binds also to host CD209 and CLEC4M/DC-SIGN(R). Interacts with host FOLR1. Interacts with BST2; this interaction inhibits the antiviral effect of BST2 and this allows viral release from infected cells. Interacts with host FCN1; this interaction enhances viral entry. Interacts with host TLR4; this interaction induces cell death in T-lymphocytes or proinflammatory cytokines and SOCS1 production in monocytes. In terms of assembly, interacts with host entry receptor NPC1. GP1 and GP2delta are part of GP1,2delta soluble complexes released by ectodomain shedding. In terms of processing, the signal peptide region modulates GP's high mannose glycosylation, thereby determining the efficiency of the interactions with DC-SIGN(R). Post-translationally, N-glycosylated. O-glycosylated in the mucin-like region. In terms of processing, palmitoylation of GP2 is not required for its function. Post-translationally, specific enzymatic cleavages in vivo yield mature proteins. The precursor is processed into GP1 and GP2 by host cell furin in the trans Golgi, and maybe by other host proteases, to yield the mature GP1 and GP2 proteins. The cleavage site corresponds to the furin optimal cleavage sequence [KR]-X-[KR]-R. This cleavage does not seem to be required for function. After the internalization of the virus into cell endosomes, GP1 C-terminus is removed by the endosomal proteases cathepsin B, cathepsin L, or both, leaving a 19-kDa N-terminal fragment which is further digested by cathepsin B. Proteolytic processing of GP1,2 by host ADAM17 can remove the transmembrane anchor of GP2 and leads to shedding of complexes consisting in GP1 and truncated GP2 (GP1,2delta).

It localises to the virion membrane. It is found in the host cell membrane. The protein localises to the secreted. Its function is as follows. Trimeric GP1,2 complexes form the virion surface spikes and mediate the viral entry processes, with GP1 acting as the receptor-binding subunit and GP2 as the membrane fusion subunit. At later times of infection, down-regulates the expression of various host cell surface molecules that are essential for immune surveillance and cell adhesion. Down-modulates several integrins including ITGA1, ITGA2, ITGA3, ITGA4, ITGA5, ITGA6, ITGAV and ITGB1. This decrease in cell adhesion molecules may lead to cell detachment, contributing to the disruption of blood vessel integrity and hemorrhages developed during infection (cytotoxicity). Interacts with host TLR4 and thereby stimulates the differentiation and activation of monocytes leading to bystander death of T-lymphocytes. Down-regulates as well the function of host natural killer cells. Counteracts the antiviral effect of host BST2/tetherin that restricts release of progeny virions from infected cells. However, cooperates with VP40 and host BST2 to activate canonical NF-kappa-B pathway in a manner dependent on neddylation. In terms of biological role, functions as a decoy for anti-GP1,2 antibodies thereby contributing to viral immune evasion. Interacts and activates host macrophages and dendritic cells inducing up-regulation of cytokine transcription. This effect is mediated throught activation of host TLR4. Responsible for binding to the receptor(s) on target cells. Interacts with CD209/DC-SIGN and CLEC4M/DC-SIGNR which act as cofactors for virus entry into dendritic cells (DCs) and endothelial cells. Binding to the macrophage specific lectin CLEC10A also seem to enhance virus infectivity. Interaction with FOLR1/folate receptor alpha may be a cofactor for virus entry in some cell types, although results are contradictory. Members of the Tyro3 receptor tyrosine kinase family also seem to be cell entry factors in filovirus infection. Once attached, the virions are internalized through clathrin-dependent endocytosis and/or macropinocytosis. After internalization of the virus into the endosomes of the host cell, proteolysis of GP1 by two cysteine proteases, CTSB/cathepsin B and CTSL/cathepsin L removes the glycan cap and allows GP1 binding to the host entry receptor NPC1. NPC1-binding, Ca(2+) and acidic pH induce a conformational change of GP2, which unmasks its fusion peptide and permit membranes fusion. Functionally, acts as a class I viral fusion protein. Under the current model, the protein has at least 3 conformational states: pre-fusion native state, pre-hairpin intermediate state, and post-fusion hairpin state. During viral and target cell membrane fusion, the coiled coil regions (heptad repeats) assume a trimer-of-hairpins structure, positioning the fusion peptide in close proximity to the C-terminal region of the ectodomain. The formation of this structure appears to drive apposition and subsequent fusion of viral and target cell membranes. Responsible for penetration of the virus into the cell cytoplasm by mediating the fusion of the membrane of the endocytosed virus particle with the endosomal membrane. Low pH in endosomes induces an irreversible conformational change in GP2, releasing the fusion hydrophobic peptide. The protein is Envelope glycoprotein (GP) of Epomops franqueti (Franquet's epauletted fruit bat).